Reading from the N-terminus, the 253-residue chain is 5-oxoprolinase subunit A (253 aa).

It belongs to the LamB/PxpA family. As to quaternary structure, forms a complex composed of PxpA, PxpB and PxpC.

It catalyses the reaction 5-oxo-L-proline + ATP + 2 H2O = L-glutamate + ADP + phosphate + H(+). Functionally, catalyzes the cleavage of 5-oxoproline to form L-glutamate coupled to the hydrolysis of ATP to ADP and inorganic phosphate. The polypeptide is 5-oxoprolinase subunit A (Bacillus licheniformis (strain ATCC 14580 / DSM 13 / JCM 2505 / CCUG 7422 / NBRC 12200 / NCIMB 9375 / NCTC 10341 / NRRL NRS-1264 / Gibson 46)).